We begin with the raw amino-acid sequence, 155 residues long: UPF0461 protein C5orf24 homolog (155 aa).

The span at 1–10 (MMHPVASSNP) shows a compositional bias: polar residues. A disordered region spans residues 1–20 (MMHPVASSNPAFCGPGKPSC). Ser37 carries the post-translational modification Phosphoserine. The disordered stretch occupies residues 40–155 (SKYSHTVNHK…QQAFRCSSDA (116 aa)). Residues 57-70 (DPLNETHLQTTSGR) show a composition bias toward polar residues. Residue Lys75 forms a Glycyl lysine isopeptide (Lys-Gly) (interchain with G-Cter in SUMO2) linkage. The segment covering 80–92 (KKKNLNRSGKRGR) has biased composition (basic residues). A compositionally biased stretch (polar residues) spans 94-107 (SGTTKSAGYRTSTG). The residue at position 121 (Ser121) is a Phosphoserine.

Belongs to the UPF0461 family.

This chain is UPF0461 protein C5orf24 homolog, found in Pongo abelii (Sumatran orangutan).